Reading from the N-terminus, the 186-residue chain is ADP compounds hydrolase NudE (186 aa).

Residue E40 participates in substrate binding. The region spanning 45–172 (TNREAVMIVP…DFNEARNVSA (128 aa)) is the Nudix hydrolase domain. Residues 80-101 (GLIDPGESVYEAANRELKEEVG) carry the Nudix box motif. Residues E95 and E99 each contribute to the a divalent metal cation site. Substrate is bound at residue S118.

This sequence belongs to the Nudix hydrolase family. In terms of assembly, homodimer. Mg(2+) is required as a cofactor.

The enzyme catalyses ADP-D-ribose + H2O = D-ribose 5-phosphate + AMP + 2 H(+). Functionally, active on adenosine(5')triphospho(5')adenosine (Ap3A), ADP-ribose, NADH, adenosine(5')diphospho(5')adenosine (Ap2A). The sequence is that of ADP compounds hydrolase NudE (nudE) from Escherichia coli (strain K12).